A 473-amino-acid chain; its full sequence is ATP synthase subunit beta (473 aa).

153 to 160 (GGAGVGKT) contributes to the ATP binding site.

This sequence belongs to the ATPase alpha/beta chains family. F-type ATPases have 2 components, CF(1) - the catalytic core - and CF(0) - the membrane proton channel. CF(1) has five subunits: alpha(3), beta(3), gamma(1), delta(1), epsilon(1). CF(0) has three main subunits: a(1), b(2) and c(9-12). The alpha and beta chains form an alternating ring which encloses part of the gamma chain. CF(1) is attached to CF(0) by a central stalk formed by the gamma and epsilon chains, while a peripheral stalk is formed by the delta and b chains.

The protein resides in the cell inner membrane. The catalysed reaction is ATP + H2O + 4 H(+)(in) = ADP + phosphate + 5 H(+)(out). Produces ATP from ADP in the presence of a proton gradient across the membrane. The catalytic sites are hosted primarily by the beta subunits. In Rickettsia canadensis (strain McKiel), this protein is ATP synthase subunit beta.